The primary structure comprises 435 residues: MNILQGSEAPLSYEEIASRAGAFDFNKNIPLKNWLRTSTTISKQAHVYVSEHDYSNGVFLLFRYCELFMKCQKHPDAAAYKKELFDYYQGVRNALEEIELIKPIVKEQYEQYQCQKNDLDDLKKLSMKDSQPSLEKPVSYVDEPILEQWALSDLQILPPSSTDLLSPDSQKLSKSSSDLPQFDYPSLNSSPTFNSNLPISSSRFEKTSLSDSKLVSPEPLDDNKDIQFIKKPIYTRTSEPRPKPAGTFKIHAYTEGGKPLRTIYLPKLLKKVFLDVVKPNTKKNLETCGILCGKLRQNAFFITHLVIPLQEATSDTCGTTDEASLFEFQDKHNLLTLGWIHTHPTQTCFMSSVDLHTHCSYQLMLPEAIAIVMAPSKNTSGIFRLLDPEGLQTIVKCRKPGLFHPHEGKVYTMVAQPGHVREINSKLQVVDLRVK.

Low complexity predominate over residues 162-181; it reads TDLLSPDSQKLSKSSSDLPQ. The disordered stretch occupies residues 162-185; the sequence is TDLLSPDSQKLSKSSSDLPQFDYP. Phosphothreonine is present on T192. An MPN domain is found at 262-392; that stretch reads TIYLPKLLKK…FRLLDPEGLQ (131 aa). Positions 341, 343, 354, 356, 397, 404, and 406 each coordinate Zn(2+). The JAMM motif signature appears at 341–354; it reads HTHPTQTCFMSSVD.

Belongs to the peptidase M67C family. Requires Zn(2+) as cofactor.

It is found in the cytoplasm. The protein localises to the endosome. Zinc metalloprotease that specifically cleaves 'Lys-63'-linked polyubiquitin chains. Does not cleave 'Lys-48'-linked polyubiquitin chains. Plays a role in the multivesicular body (MVB) sorting pathway. Required for ubiquitin-dependent sorting of proteins into the endosome and subsequent trafficking to the vacuole. May regulate MVB sorting through deubiquitination of ubiquitinated ESCRT proteins. This chain is AMSH-like protease sst2 (sst2), found in Schizosaccharomyces pombe (strain 972 / ATCC 24843) (Fission yeast).